The sequence spans 247 residues: ATP synthase subunit a, chloroplastic (247 aa).

Transmembrane regions (helical) follow at residues 38–58 (QVLITSWVVIAILLGSASIAV), 95–115 (VPFIGTMFLFIFVSNWSGALL), 134–154 (INTTVALALLTSVAYFYAGLS), 199–219 (LVVVVLVSLVPSVVPIPVMFL), and 220–240 (GLFTSGIQALIFATLAAAYIG).

This sequence belongs to the ATPase A chain family. As to quaternary structure, F-type ATPases have 2 components, CF(1) - the catalytic core - and CF(0) - the membrane proton channel. CF(1) has five subunits: alpha(3), beta(3), gamma(1), delta(1), epsilon(1). CF(0) has four main subunits: a, b, b' and c.

The protein localises to the plastid. Its subcellular location is the chloroplast thylakoid membrane. Its function is as follows. Key component of the proton channel; it plays a direct role in the translocation of protons across the membrane. This Oenothera argillicola (Appalachian evening primrose) protein is ATP synthase subunit a, chloroplastic.